The primary structure comprises 522 residues: Transmembrane protein 213R (522 aa).

A run of 2 helical transmembrane segments spans residues 33 to 50 (NTIT…LLFG) and 55 to 72 (SLYI…IYSQ).

It belongs to the IIV-6 213R family.

Its subcellular location is the membrane. The sequence is that of Transmembrane protein 213R from Invertebrate iridescent virus 6 (IIV-6).